Consider the following 591-residue polypeptide: CTP synthase 1 (591 aa).

One can recognise a Glutamine amidotransferase type-1 domain in the interval 300–554 (SIALVGKYTK…LAAAGRLQSY (255 aa)). Active-site for GATase activity residues include Cys399, His526, and Glu528. 2 positions are modified to phosphoserine: Ser571 and Ser575.

It belongs to the CTP synthase family.

It carries out the reaction UTP + L-glutamine + ATP + H2O = CTP + L-glutamate + ADP + phosphate + 2 H(+). The protein operates within pyrimidine metabolism; CTP biosynthesis via de novo pathway; CTP from UDP: step 2/2. Functionally, this enzyme is involved in the de novo synthesis of CTP, a precursor of DNA, RNA and phospholipids. Catalyzes the ATP-dependent amination of UTP to CTP with either L-glutamine or ammonia as a source of nitrogen. This Danio rerio (Zebrafish) protein is CTP synthase 1 (ctps1).